Reading from the N-terminus, the 353-residue chain is Outer membrane protein A (353 aa).

Residues 1–21 (MKKTAIALAVALVGFATVAQA) form the signal peptide. The next 8 membrane-spanning stretches (beta stranded) occupy residues 27–37 (TWYTGGKLGWS), 56–67 (QLGAGAFFGYQA), 71–79 (LGFEMGYDW), 97–108 (QGVQLAAKLSYP), 113–121 (LDVYTRLGG), 148–157 (PLVALGAEYA), 162–169 (WATRMEYQ), and 188–196 (LLSVGVSYR). Repeat copies occupy residues 208–209 (AP), 210–211 (TP), 212–213 (AP), and 214–215 (AP). The tract at residues 208 to 215 (APTPAPAP) is 4 X 2 AA approximate tandem repeats of A-P. An OmpA-like domain is found at 217-345 (VDTKRFTLKS…RVEIEVKGYK (129 aa)). An intrachain disulfide couples Cys-318 to Cys-330.

It belongs to the outer membrane OOP (TC 1.B.6) superfamily. OmpA family. Monomer and homodimer.

Its subcellular location is the cell outer membrane. In terms of biological role, with TolR probably plays a role in maintaining the position of the peptidoglycan cell wall in the periplasm. Acts as a porin with low permeability that allows slow penetration of small solutes; an internal gate slows down solute passage. In Yersinia pseudotuberculosis serotype I (strain IP32953), this protein is Outer membrane protein A.